A 396-amino-acid chain; its full sequence is tRNA(Met) cytidine acetate ligase (396 aa).

Residues 9 to 22 (IVEY…HLHH), Gly103, Asn154, and Arg179 contribute to the ATP site.

Belongs to the TmcAL family.

It is found in the cytoplasm. The catalysed reaction is cytidine(34) in elongator tRNA(Met) + acetate + ATP = N(4)-acetylcytidine(34) in elongator tRNA(Met) + AMP + diphosphate. In terms of biological role, catalyzes the formation of N(4)-acetylcytidine (ac(4)C) at the wobble position of elongator tRNA(Met), using acetate and ATP as substrates. First activates an acetate ion to form acetyladenylate (Ac-AMP) and then transfers the acetyl group to tRNA to form ac(4)C34. The chain is tRNA(Met) cytidine acetate ligase from Fusobacterium nucleatum subsp. nucleatum (strain ATCC 25586 / DSM 15643 / BCRC 10681 / CIP 101130 / JCM 8532 / KCTC 2640 / LMG 13131 / VPI 4355).